Here is a 287-residue protein sequence, read N- to C-terminus: CTD small phosphatase-like protein 3 (287 aa).

The region spanning 60–219 (RSTPEYTLVL…LKLCSFLEAI (160 aa)) is the FCP1 homology domain.

This sequence belongs to the CTDSPL2 family.

Its function is as follows. Probable phosphatase. In Caenorhabditis elegans, this protein is CTD small phosphatase-like protein 3 (scpl-3).